Consider the following 748-residue polypeptide: Translation factor GUF1 homolog 2, mitochondrial (748 aa).

The transit peptide at 1–29 directs the protein to the mitochondrion; it reads MRVGCCLLLKPLRQRLCTASISSRHIMRW. The tr-type G domain occupies 94 to 276; that stretch reads SHIRNVAVVA…AIIERVPPPT (183 aa). GTP contacts are provided by residues 103 to 110, 167 to 171, and 221 to 224; these read AHVDHGKT, DTPGH, and TKMD.

This sequence belongs to the TRAFAC class translation factor GTPase superfamily. Classic translation factor GTPase family. LepA subfamily.

The protein resides in the mitochondrion inner membrane. It catalyses the reaction GTP + H2O = GDP + phosphate + H(+). In terms of biological role, promotes mitochondrial protein synthesis. May act as a fidelity factor of the translation reaction, by catalyzing a one-codon backward translocation of tRNAs on improperly translocated ribosomes. Binds to mitochondrial ribosomes in a GTP-dependent manner. This is Translation factor GUF1 homolog 2, mitochondrial from Trypanosoma cruzi (strain CL Brener).